Reading from the N-terminus, the 227-residue chain is Ribonuclease 3 (227 aa).

The 123-residue stretch at 6-128 (ASDYQQRIGY…VIAAIYLDAD (123 aa)) folds into the RNase III domain. E41 serves as a coordination point for Mg(2+). Residue D45 is part of the active site. D114 and E117 together coordinate Mg(2+). Residue E117 is part of the active site. Residues 155-225 (DPKTRLQEWL…ASHAIDQLDS (71 aa)) form the DRBM domain. Over residues 203–212 (GEGSSRRLAE) the composition is skewed to basic and acidic residues. The interval 203–227 (GEGSSRRLAEQDAASHAIDQLDSNK) is disordered.

Belongs to the ribonuclease III family. In terms of assembly, homodimer. It depends on Mg(2+) as a cofactor.

It is found in the cytoplasm. It catalyses the reaction Endonucleolytic cleavage to 5'-phosphomonoester.. Digests double-stranded RNA. Involved in the processing of primary rRNA transcript to yield the immediate precursors to the large and small rRNAs (23S and 16S). Processes some mRNAs, and tRNAs when they are encoded in the rRNA operon. Processes pre-crRNA and tracrRNA of type II CRISPR loci if present in the organism. This is Ribonuclease 3 from Xylella fastidiosa (strain M23).